We begin with the raw amino-acid sequence, 142 residues long: Hemoglobin subunit alpha-A (142 aa).

The Globin domain maps to 2–142 (VLSAADKNNV…VGTVLTAKYR (141 aa)). O2 is bound at residue H59. H88 contributes to the heme b binding site.

It belongs to the globin family. Heterotetramer of two alpha chains and two beta chains. In terms of tissue distribution, red blood cells.

Functionally, involved in oxygen transport from the lung to the various peripheral tissues. This is Hemoglobin subunit alpha-A (HBAA) from Gallus gallus (Chicken).